The following is a 526-amino-acid chain: Glucose-6-phosphate isomerase (526 aa).

Glu320 functions as the Proton donor in the catalytic mechanism. Catalysis depends on residues His349 and Lys453.

It belongs to the GPI family.

It is found in the cytoplasm. It carries out the reaction alpha-D-glucose 6-phosphate = beta-D-fructose 6-phosphate. Its pathway is carbohydrate biosynthesis; gluconeogenesis. The protein operates within carbohydrate degradation; glycolysis; D-glyceraldehyde 3-phosphate and glycerone phosphate from D-glucose: step 2/4. Functionally, catalyzes the reversible isomerization of glucose-6-phosphate to fructose-6-phosphate. This is Glucose-6-phosphate isomerase from Gloeothece citriformis (strain PCC 7424) (Cyanothece sp. (strain PCC 7424)).